A 649-amino-acid chain; its full sequence is Echinoderm microtubule-associated protein-like 2 (649 aa).

Residues Lys10–Val649 are tandem atypical propeller in EMLs. Coiled-coil stretches lie at residues Ile13 to Glu58 and Tyr73 to His114. WD repeat units lie at residues Lys56–Val93, Arg97–Ser144, His151–Trp192, Glu195–Leu234, Lys241–Lys280, Ile285–Ser323, Phe369–Ser406, Gln410–Thr447, Leu452–Val489, Lys495–Pro535, Phe564–Tyr602, and Ala609–Val648.

The protein belongs to the WD repeat EMAP family. In terms of assembly, homotrimer; self-association is mediated by the N-terminal coiled coil. Interacts with GRID2 and may also interact with GRID1. Interacts with EML3. Binds unpolymerized tubulins via its WD repeat region. Ubiquitous.

It is found in the cytoplasm. The protein localises to the cytoskeleton. It localises to the spindle. In terms of biological role, tubulin binding protein that inhibits microtubule nucleation and growth, resulting in shorter microtubules. The polypeptide is Echinoderm microtubule-associated protein-like 2 (EML2) (Homo sapiens (Human)).